The chain runs to 223 residues: Serum amyloid P-component (223 aa).

The signal sequence occupies residues 1 to 19 (MNKPLLWISVLTSLLEAFA). The Pentraxin (PTX) domain occupies 24 to 223 (SGKVFVFPRE…YVIIKPLVWV (200 aa)). Asn-51 carries N-linked (GlcNAc...) asparagine glycosylation. The cysteines at positions 55 and 114 are disulfide-linked. Ca(2+) is bound by residues Asp-77, Asn-78, Glu-155, Gln-156, Asp-157, and Gln-167.

The protein belongs to the pentraxin family. Homopentamer. Pentraxin (or pentaxin) have a discoid arrangement of 5 non-covalently bound subunits. Ca(2+) serves as cofactor. Post-translationally, N-glycosylated with a complex biantennary oligosaccharide chain with a sialic acid at the end (disialo-SAP). Monosialo-SAP as well as asioalo-SAP are also detected. Found in serum and urine.

The protein resides in the secreted. Can interact with DNA and histones and may scavenge nuclear material released from damaged circulating cells. May also function as a calcium-dependent lectin. The polypeptide is Serum amyloid P-component (APCS) (Homo sapiens (Human)).